Reading from the N-terminus, the 251-residue chain is Isoprenyl transferase (251 aa).

Aspartate 31 is a catalytic residue. Aspartate 31 lines the Mg(2+) pocket. Residues 32-35 (GNGR), tryptophan 36, arginine 44, histidine 48, and 76-78 (STE) each bind substrate. The Proton acceptor role is filled by asparagine 79. Residues tryptophan 80, arginine 82, arginine 199, and 205-207 (RIS) each bind substrate. Glutamate 218 serves as a coordination point for Mg(2+).

Belongs to the UPP synthase family. Homodimer. It depends on Mg(2+) as a cofactor.

Functionally, catalyzes the condensation of isopentenyl diphosphate (IPP) with allylic pyrophosphates generating different type of terpenoids. In Thermosynechococcus vestitus (strain NIES-2133 / IAM M-273 / BP-1), this protein is Isoprenyl transferase.